Reading from the N-terminus, the 20-residue chain is D-alpha-glycerophosphatase (20 aa).

Monomer. The cofactor is Mg(2+). Mn(2+) is required as a cofactor.

It localises to the cytoplasm. It participates in polyol metabolism; glycerol biosynthesis. The polypeptide is D-alpha-glycerophosphatase (Bacillus licheniformis).